The primary structure comprises 492 residues: Catalase isozyme 1 (492 aa).

Catalysis depends on residues His65 and Asn138. Position 348 (Tyr348) interacts with heme.

It belongs to the catalase family. Homotetramer. Heme is required as a cofactor. In terms of tissue distribution, high expression in seeds and early seedlings.

It localises to the glyoxysome. The catalysed reaction is 2 H2O2 = O2 + 2 H2O. Its function is as follows. Occurs in almost all aerobically respiring organisms and serves to protect cells from the toxic effects of hydrogen peroxide. This is Catalase isozyme 1 (CAT1) from Cucurbita pepo (Vegetable marrow).